The following is a 399-amino-acid chain: MTQTIPSPKPWSINKPTALLVLANGTVIEGKGAGATGFAEAEICFNTAMTGYEEILTDPSYKKQIVNFTFPHIGNVGTNSEDIEDLIPLNCHGAVGAIFKADITHPSNYRANENLNQWLKKRKIIALCGIDTRALTVLIREKGALNGIIAHDPNGNFDINTLKKRAQKWTGLVNLDLAQEVTSKQSMKWNEKPWVWNKGYKTNNDASNFHIVAIDYGIKRNILRLIAAHSAHITIVPANTNIEEILAMNPDGVFLSNGPGDPAATANYAVPTIQALIDSNIPLFGICLGHQLLALAVGAKTIKMHQGHHGANHPVKDFITGKVEIVSMNHGFTVDTTSLPQHVEETHISLFDNSNCGLRIIGKPVFSVQHHPEASPGPQDSHYLFQRFFNLIMDYKKTA.

The CPSase stretch occupies residues 1–206; it reads MTQTIPSPKP…NKGYKTNNDA (206 aa). 3 residues coordinate L-glutamine: serine 60, glycine 258, and glycine 260. The region spanning 210 to 398 is the Glutamine amidotransferase type-1 domain; it reads HIVAIDYGIK…FNLIMDYKKT (189 aa). Catalysis depends on cysteine 287, which acts as the Nucleophile. 5 residues coordinate L-glutamine: leucine 288, glutamine 291, asparagine 329, glycine 331, and phenylalanine 332. Active-site residues include histidine 371 and glutamate 373.

Belongs to the CarA family. As to quaternary structure, composed of two chains; the small (or glutamine) chain promotes the hydrolysis of glutamine to ammonia, which is used by the large (or ammonia) chain to synthesize carbamoyl phosphate. Tetramer of heterodimers (alpha,beta)4.

It carries out the reaction hydrogencarbonate + L-glutamine + 2 ATP + H2O = carbamoyl phosphate + L-glutamate + 2 ADP + phosphate + 2 H(+). The catalysed reaction is L-glutamine + H2O = L-glutamate + NH4(+). The protein operates within amino-acid biosynthesis; L-arginine biosynthesis; carbamoyl phosphate from bicarbonate: step 1/1. It functions in the pathway pyrimidine metabolism; UMP biosynthesis via de novo pathway; (S)-dihydroorotate from bicarbonate: step 1/3. Its function is as follows. Small subunit of the glutamine-dependent carbamoyl phosphate synthetase (CPSase). CPSase catalyzes the formation of carbamoyl phosphate from the ammonia moiety of glutamine, carbonate, and phosphate donated by ATP, constituting the first step of 2 biosynthetic pathways, one leading to arginine and/or urea and the other to pyrimidine nucleotides. The small subunit (glutamine amidotransferase) binds and cleaves glutamine to supply the large subunit with the substrate ammonia. The chain is Carbamoyl phosphate synthase small chain from Bartonella henselae (strain ATCC 49882 / DSM 28221 / CCUG 30454 / Houston 1) (Rochalimaea henselae).